A 417-amino-acid polypeptide reads, in one-letter code: Gamma-glutamyl phosphate reductase (417 aa).

Belongs to the gamma-glutamyl phosphate reductase family.

The protein localises to the cytoplasm. It carries out the reaction L-glutamate 5-semialdehyde + phosphate + NADP(+) = L-glutamyl 5-phosphate + NADPH + H(+). It functions in the pathway amino-acid biosynthesis; L-proline biosynthesis; L-glutamate 5-semialdehyde from L-glutamate: step 2/2. Its function is as follows. Catalyzes the NADPH-dependent reduction of L-glutamate 5-phosphate into L-glutamate 5-semialdehyde and phosphate. The product spontaneously undergoes cyclization to form 1-pyrroline-5-carboxylate. This chain is Gamma-glutamyl phosphate reductase, found in Desulfitobacterium hafniense (strain DSM 10664 / DCB-2).